Consider the following 495-residue polypeptide: Adenosylhomocysteinase (495 aa).

Residues T71, D156, and E218 each contribute to the substrate site. NAD(+) is bound at residue 219 to 221; the sequence is TTT. K248 and D252 together coordinate substrate. NAD(+) is bound by residues N253, 282-287, E305, N340, 361-363, and N409; these read GYGDVG and IGH.

The protein belongs to the adenosylhomocysteinase family. NAD(+) serves as cofactor.

It is found in the cytoplasm. It carries out the reaction S-adenosyl-L-homocysteine + H2O = L-homocysteine + adenosine. The protein operates within amino-acid biosynthesis; L-homocysteine biosynthesis; L-homocysteine from S-adenosyl-L-homocysteine: step 1/1. Its function is as follows. May play a key role in the regulation of the intracellular concentration of adenosylhomocysteine. The chain is Adenosylhomocysteinase from Mycobacterium tuberculosis (strain ATCC 25177 / H37Ra).